A 505-amino-acid polypeptide reads, in one-letter code: RNA-splicing ligase RtcB homolog (505 aa).

5 residues coordinate Mn(2+): Asp119, Cys122, His227, His259, and His353. A GMP-binding site is contributed by 226 to 230 (NHYAE). GMP-binding positions include 353 to 354 (HN), 402 to 405 (GGTM), Ser409, 428 to 431 (HGAG), and Lys504. Residue His428 is the GMP-histidine intermediate of the active site.

This sequence belongs to the RtcB family. Catalytic component of the tRNA-splicing ligase complex. Mn(2+) serves as cofactor.

It carries out the reaction a 3'-end 3'-phospho-ribonucleotide-RNA + a 5'-end dephospho-ribonucleoside-RNA + GTP = a ribonucleotidyl-ribonucleotide-RNA + GMP + diphosphate. The enzyme catalyses a 3'-end 2',3'-cyclophospho-ribonucleotide-RNA + a 5'-end dephospho-ribonucleoside-RNA + GTP + H2O = a ribonucleotidyl-ribonucleotide-RNA + GMP + diphosphate + H(+). In terms of biological role, catalytic subunit of the tRNA-splicing ligase complex that acts by directly joining spliced tRNA halves to mature-sized tRNAs by incorporating the precursor-derived splice junction phosphate into the mature tRNA as a canonical 3',5'-phosphodiester. May act as an RNA ligase with broad substrate specificity, and may function toward other RNAs. The polypeptide is RNA-splicing ligase RtcB homolog (Nematostella vectensis (Starlet sea anemone)).